The chain runs to 208 residues: RNA-binding protein KhpB (208 aa).

The jag_N domain stretch occupies residues 5-55 (TAAGRNVDEAVQSGLQELGLTKDKVEITVIEEGNKGFLGIFGKKPAIVKLV). The region spanning 58-135 (IDPIQQAKLY…GQYKNVTVDA (78 aa)) is the KH domain. In terms of domain architecture, R3H spans 140-208 (LKRKETLSQL…NRHLVISHKR (69 aa)).

The protein belongs to the KhpB RNA-binding protein family. Forms a complex with KhpA.

The protein localises to the cytoplasm. Its function is as follows. A probable RNA chaperone. Forms a complex with KhpA which binds to cellular RNA and controls its expression. Plays a role in peptidoglycan (PG) homeostasis and cell length regulation. The polypeptide is RNA-binding protein KhpB (Bacillus subtilis (strain 168)).